Consider the following 173-residue polypeptide: Siroheme decarboxylase alpha subunit (173 aa).

Substrate is bound by residues His-115 and Arg-119.

It belongs to the Ahb/Nir family. As to quaternary structure, forms a heterodimer composed of AhbA and AhbB.

The catalysed reaction is siroheme + 2 H(+) = 12,18-didecarboxysiroheme + 2 CO2. The protein operates within porphyrin-containing compound metabolism; protoheme biosynthesis. Its function is as follows. Involved in siroheme-dependent heme b biosynthesis. Catalyzes the decarboxylation of siroheme into didecarboxysiroheme. Siroheme is decarboxylated to monodecarboxysiroheme, which is in turn decarboxylated to didecarboxysiroheme. This Desulfovibrio desulfuricans (strain ATCC 27774 / DSM 6949 / MB) protein is Siroheme decarboxylase alpha subunit.